Reading from the N-terminus, the 106-residue chain is Large ribosomal subunit protein eL42 (106 aa).

It belongs to the eukaryotic ribosomal protein eL42 family.

The sequence is that of Large ribosomal subunit protein eL42 (RPL44) from Kluyveromyces marxianus (Yeast).